We begin with the raw amino-acid sequence, 450 residues long: ATP-dependent protease ATPase subunit HslU (450 aa).

ATP is bound by residues valine 29, 71–76, aspartate 261, glutamate 328, and arginine 400; that span reads GVGKTE.

It belongs to the ClpX chaperone family. HslU subfamily. In terms of assembly, a double ring-shaped homohexamer of HslV is capped on each side by a ring-shaped HslU homohexamer. The assembly of the HslU/HslV complex is dependent on binding of ATP.

It is found in the cytoplasm. Its function is as follows. ATPase subunit of a proteasome-like degradation complex; this subunit has chaperone activity. The binding of ATP and its subsequent hydrolysis by HslU are essential for unfolding of protein substrates subsequently hydrolyzed by HslV. HslU recognizes the N-terminal part of its protein substrates and unfolds these before they are guided to HslV for hydrolysis. In Rickettsia akari (strain Hartford), this protein is ATP-dependent protease ATPase subunit HslU.